We begin with the raw amino-acid sequence, 81 residues long: Putative membrane protein insertion efficiency factor (81 aa).

A disordered region spans residues 60-81 (WNPGGYDPVPTHNTSNSSPMAE). A compositionally biased stretch (polar residues) spans 70-81 (THNTSNSSPMAE).

It belongs to the UPF0161 family.

The protein resides in the cell inner membrane. Could be involved in insertion of integral membrane proteins into the membrane. This is Putative membrane protein insertion efficiency factor from Stutzerimonas stutzeri (strain A1501) (Pseudomonas stutzeri).